We begin with the raw amino-acid sequence, 82 residues long: U1-plectoxin-Pt1a (82 aa).

An N-terminal signal peptide occupies residues 1–20; sequence MKHLIFSSALVCALVVCTFA. The propeptide occupies 21–33; sequence EEQVNVPFLPDER. 5 disulfides stabilise this stretch: Cys-37-Cys-51, Cys-44-Cys-57, Cys-50-Cys-68, Cys-54-Cys-77, and Cys-59-Cys-66. Ser-79 is lipidated: O-palmitoyl serine. A propeptide spanning residues 80-82 is cleaved from the precursor; that stretch reads RRR.

This sequence belongs to the neurotoxin 02 (plectoxin) family. 02 (plectoxin) subfamily. In terms of processing, plectoxin-5 presumably undergoes post-translational modification to give rise to plectoxin-6. In terms of tissue distribution, expressed by the venom gland.

The protein localises to the secreted. Potent toxin that may paralyze and/or kill insect pests such as H.virescens (lepidoptera), S.exigua (beet armyworm) and M.sexta (tobacco hornworm). The polypeptide is U1-plectoxin-Pt1a (Plectreurys tristis (Spider)).